The following is a 339-amino-acid chain: Ribosomal RNA small subunit methyltransferase H (339 aa).

Residues 44–46 (GGY), aspartate 61, phenylalanine 88, aspartate 105, and glutamine 112 contribute to the S-adenosyl-L-methionine site. The segment at 263–312 (PQAQSRHLPEKAAAQPVFEKPMKPVSPGEAETAENPRARSAHLRAARRTA) is disordered. Residues 301-312 (RSAHLRAARRTA) are compositionally biased toward basic residues.

This sequence belongs to the methyltransferase superfamily. RsmH family.

It is found in the cytoplasm. It catalyses the reaction cytidine(1402) in 16S rRNA + S-adenosyl-L-methionine = N(4)-methylcytidine(1402) in 16S rRNA + S-adenosyl-L-homocysteine + H(+). Specifically methylates the N4 position of cytidine in position 1402 (C1402) of 16S rRNA. In Chelativorans sp. (strain BNC1), this protein is Ribosomal RNA small subunit methyltransferase H.